The primary structure comprises 521 residues: Cysteine protease atg-4.2 (521 aa).

Over residues 90–100 (MMGSIRPSSSS) the composition is skewed to low complexity. A disordered region spans residues 90-109 (MMGSIRPSSSSQDVHSTGEI). Residue cysteine 203 is the Nucleophile of the active site. Catalysis depends on residues aspartate 394 and histidine 396. Residues 499–521 (PSYEREVSETEQAQADKHGFEML) form a disordered region.

The protein belongs to the peptidase C54 family.

It is found in the cytoplasm. It carries out the reaction [protein]-C-terminal L-amino acid-glycyl-phosphatidylethanolamide + H2O = [protein]-C-terminal L-amino acid-glycine + a 1,2-diacyl-sn-glycero-3-phosphoethanolamine. Cysteine protease required for autophagy. Cleaves the C-terminal amino acid of ATG8 family proteins lgg-1, to reveal a C-terminal glycine. Exposure of the glycine at the C-terminus is essential for ATG8 proteins conjugation to phosphatidylethanolamine (PE) and insertion to membranes, which is necessary for autophagy. Its cleavage activity is functionally redundant to atg-4.1, but it cleaves lgg-1 precursors less efficiently than atg-4.1. In contrast to atg-4.1, plays a more significant role in the later phases of autophagy and in addition has a role in autophagosome maturation. Acts redundantly with atg-4.1 to promote the lgg-1 delipidation to release the protein from membranes, which facilitates multiple events during macroautophagy. Regulates the accumulation of autophagic structures in neurons and is specifically, required for the maturation and elimination of autophagosomes from the synaptic region of AIY interneurons. This is Cysteine protease atg-4.2 from Caenorhabditis elegans.